A 496-amino-acid chain; its full sequence is NADP-dependent glyceraldehyde-3-phosphate dehydrogenase (496 aa).

Substrate is bound by residues R116 and 169–170 (NY). Residues K192, T195, and D230 each contribute to the NADP(+) site. 245-249 (GGDTG) contacts NAD(+). E264 serves as the catalytic Proton acceptor. Residue 297–299 (RCT) coordinates substrate. Residue C298 is the Nucleophile of the active site. E391 contributes to the NADP(+) binding site. Residue S404 is modified to Phosphoserine. Residue R451 participates in substrate binding.

Belongs to the aldehyde dehydrogenase family. As to quaternary structure, interacts with 14-3-3 protein when phosphorylated. This interaction is released by divalent cations. Post-translationally, phosphorylated in shoots and non-photosynthetic tissues, but not in leaves.

The protein resides in the cytoplasm. The catalysed reaction is D-glyceraldehyde 3-phosphate + NADP(+) + H2O = (2R)-3-phosphoglycerate + NADPH + 2 H(+). Its activity is regulated as follows. Insensitive to magnesium or calcium when dephosphorylated. When phosphorylated, 3-fold activation by magnesium or calcium, 2-fold activation by potassium, inhibited by ADP and AMP and insensitive to ATP or PPi. In terms of biological role, important as a means of generating NADPH for biosynthetic reactions. The polypeptide is NADP-dependent glyceraldehyde-3-phosphate dehydrogenase (GAPN) (Triticum aestivum (Wheat)).